The following is a 291-amino-acid chain: tRNA-uridine aminocarboxypropyltransferase 1 (291 aa).

Residues 158–181 (KNSAYEPSSKRPKFSPENDKNTYE) form a disordered region. Residues 171-181 (FSPENDKNTYE) are compositionally biased toward basic and acidic residues. The short motif at 199–202 (DSTW) is the DXTW element.

The protein belongs to the TDD superfamily. DTWD1 family.

Its subcellular location is the nucleus. It carries out the reaction a uridine in tRNA + S-adenosyl-L-methionine = a 3-[(3S)-3-amino-3-carboxypropyl]uridine in tRNA + S-methyl-5'-thioadenosine + H(+). Catalyzes the formation of 3-(3-amino-3-carboxypropyl)uridine (acp3U) at position 20 in the D-loop of several cytoplasmic tRNAs (acp3U(20)). The sequence is that of tRNA-uridine aminocarboxypropyltransferase 1 from Xenopus laevis (African clawed frog).